Reading from the N-terminus, the 170-residue chain is Large ribosomal subunit protein uL5 (170 aa).

The protein belongs to the universal ribosomal protein uL5 family. In terms of assembly, component of the large ribosomal subunit.

It is found in the nucleus. The protein resides in the cytoplasm. In terms of biological role, component of the ribosome, a large ribonucleoprotein complex responsible for the synthesis of proteins in the cell. The small ribosomal subunit (SSU) binds messenger RNAs (mRNAs) and translates the encoded message by selecting cognate aminoacyl-transfer RNA (tRNA) molecules. The large subunit (LSU) contains the ribosomal catalytic site termed the peptidyl transferase center (PTC), which catalyzes the formation of peptide bonds, thereby polymerizing the amino acids delivered by tRNAs into a polypeptide chain. The nascent polypeptides leave the ribosome through a tunnel in the LSU and interact with protein factors that function in enzymatic processing, targeting, and the membrane insertion of nascent chains at the exit of the ribosomal tunnel. In Chlamydomonas reinhardtii (Chlamydomonas smithii), this protein is Large ribosomal subunit protein uL5 (RPL11).